Here is a 625-residue protein sequence, read N- to C-terminus: Probable potassium transport system protein Kup 2 (625 aa).

A run of 12 helical transmembrane segments spans residues 15 to 35, 52 to 72, 98 to 118, 134 to 154, 164 to 184, 212 to 232, 246 to 266, 284 to 304, 336 to 356, 365 to 385, 394 to 414, and 417 to 437; these read LSFA…LYAF, ILSL…LVIV, GGWL…DGML, LSPN…FFLF, IGVY…ILGF, FALF…ALFA, WFAV…AFVL, FLPV…QAII, VYLP…VVIF, AYGI…GIIA, FKIL…AGNI, and LLTG…VMYT.

The protein belongs to the HAK/KUP transporter (TC 2.A.72) family.

Its subcellular location is the cell inner membrane. The enzyme catalyses K(+)(in) + H(+)(in) = K(+)(out) + H(+)(out). Its function is as follows. Transport of potassium into the cell. Likely operates as a K(+):H(+) symporter. The protein is Probable potassium transport system protein Kup 2 of Legionella pneumophila (strain Paris).